Reading from the N-terminus, the 397-residue chain is Alpha-2B adrenergic receptor (397 aa).

A helical membrane pass occupies residues 1 to 25 (AIAAIIIFLILFTIFGNALVILAVL). Topologically, residues 26–36 (TSRSLRAPQNL) are cytoplasmic. Residues 37–62 (FLVSLAAADILVATLIIPFSLANELL) traverse the membrane as a helical segment. Over 63 to 72 (GYWYFRRMWC) the chain is Extracellular. A disulfide bond links C72 and C151. Residues 73 to 95 (KVYLALDVLFCTSSIVHLCAISL) form a helical membrane-spanning segment. Over 96-117 (DRYWAVSRALEYNSKRTPRRIK) the chain is Cytoplasmic. The helical transmembrane segment at 118 to 140 (CIILMVWLIAAVISLPSLVYKGD) threads the bilayer. The Extracellular segment spans residues 141-156 (QGPQPSGAPQCNLNQE). Residues 157 to 180 (TWYILASSIGSFFAPCLIMILVYL) form a helical membrane-spanning segment. The Cytoplasmic portion of the chain corresponds to 181–361 (RIYLIAKRSH…LSREKRFTFV (181 aa)). 2 disordered regions span residues 193–212 (GPRA…RQVP) and 230–319 (AAGE…LQQP). Residues 280–300 (SLEEEAEEEEEGEEEREEECE) show a composition bias toward acidic residues. Residues 301 to 319 (PQALPASPASACSPPLQQP) show a composition bias toward low complexity. A helical membrane pass occupies residues 362–385 (LAVVIGVFVLCWFPFFFSYSLGAI). The Extracellular portion of the chain corresponds to 386–394 (CPQQCKVPH). A helical transmembrane segment spans residues 395–397 (DLF).

Belongs to the G-protein coupled receptor 1 family. Adrenergic receptor subfamily. ADRA2B sub-subfamily. As to quaternary structure, interacts with RAB26. Interacts with PPP1R9B.

The protein localises to the cell membrane. Functionally, alpha-2 adrenergic receptors mediate the catecholamine-induced inhibition of adenylate cyclase through the action of G proteins. The chain is Alpha-2B adrenergic receptor (ADRA2B) from Talpa europaea (European mole).